Consider the following 573-residue polypeptide: Delta 8-(E)-sphingolipid desaturase (573 aa).

The 76-residue stretch at 2-77 (SRVLSRRDIA…FKIWKIGRID (76 aa)) folds into the Cytochrome b5 heme-binding domain. The heme site is built by His37 and His60. A helical membrane pass occupies residues 228–248 (LFGISFYLLSLKWFAISAICL). The short motif at 260-264 (HDAGH) is the Histidine box-1 element. A helical membrane pass occupies residues 273 to 293 (VDNIIGMTVASWIGGLSLGWW). A Histidine box-2 motif is present at residues 297–301 (HNVHH). Transmembrane regions (helical) follow at residues 353 to 372 (YLYY…LSWM), 393 to 413 (LAGL…KQMP), and 422 to 442 (VMIS…SHFA). A Histidine box-3 motif is present at residues 481 to 485 (QVIHH).

It belongs to the fatty acid desaturase type 1 family.

Its subcellular location is the membrane. The enzyme catalyses an N-acylsphing-4-enine + 2 Fe(II)-[cytochrome b5] + O2 + 2 H(+) = a (4E,8E)-4-sphinga-4,8-dienine ceramide + 2 Fe(III)-[cytochrome b5] + 2 H2O. It participates in lipid metabolism; sphingolipid metabolism. Functionally, delta(8)-fatty-acid desaturase which introduces a double bond at the 8-position in the long-chain base (LCB) of ceramides. Required for the formation of the di-unsaturated sphingoid base (E,E)-sphinga-4,8-dienine during glucosylceramide (GluCer) biosynthesis. This is Delta 8-(E)-sphingolipid desaturase from Kluyveromyces lactis (strain ATCC 8585 / CBS 2359 / DSM 70799 / NBRC 1267 / NRRL Y-1140 / WM37) (Yeast).